The primary structure comprises 310 residues: Putative carbonic anhydrase 5 (310 aa).

A signal peptide spans 1–20 (MPSHLLVLSLLVALLVVVSC). In terms of domain architecture, Alpha-carbonic anhydrase spans 26–280 (HGWGYDENNG…LNGRRIQYRP (255 aa)). Residues histidine 117, histidine 119, and histidine 142 each contribute to the Zn(2+) site. Residue 223-224 (TT) participates in substrate binding.

This sequence belongs to the alpha-carbonic anhydrase family.

The protein localises to the secreted. The enzyme catalyses hydrogencarbonate + H(+) = CO2 + H2O. Its function is as follows. Reversible hydration of carbon dioxide. The protein is Putative carbonic anhydrase 5 (cah-5) of Caenorhabditis elegans.